Consider the following 608-residue polypeptide: Glutamyl-tRNA(Gln) amidotransferase subunit E (608 aa).

This sequence belongs to the GatB/GatE family. GatE subfamily. In terms of assembly, heterodimer of GatD and GatE.

The enzyme catalyses L-glutamyl-tRNA(Gln) + L-glutamine + ATP + H2O = L-glutaminyl-tRNA(Gln) + L-glutamate + ADP + phosphate + H(+). Functionally, allows the formation of correctly charged Gln-tRNA(Gln) through the transamidation of misacylated Glu-tRNA(Gln) in organisms which lack glutaminyl-tRNA synthetase. The reaction takes place in the presence of glutamine and ATP through an activated gamma-phospho-Glu-tRNA(Gln). The GatDE system is specific for glutamate and does not act on aspartate. The sequence is that of Glutamyl-tRNA(Gln) amidotransferase subunit E from Pyrobaculum aerophilum (strain ATCC 51768 / DSM 7523 / JCM 9630 / CIP 104966 / NBRC 100827 / IM2).